Consider the following 262-residue polypeptide: MTEEEDYMSDSFINVQEDVRPGVPMLRQIREARRKEEKQQQANLRNRQKSVKEEERERRDIGLKNALGCENKGFALLQKMGYKSGQALGKSGDGIVEPIPLNVKTGKSGIGHESSLKRKAEERLENYRRKIHMKNQNEAKAAEEFRMRLKSKQDEMRLEGDLRRSQRACQQLDAQKNIQVPREAWYWLRPEEETEEEEEEEEKEEQDEDECPSEDLSVLEKLQILTGYLREEHLYCIWCGTAYEDKEDLSSNCPGPTSADHD.

The segment at 1-60 (MTEEEDYMSDSFINVQEDVRPGVPMLRQIREARRKEEKQQQANLRNRQKSVKEEERERRD) is disordered. 2 stretches are compositionally biased toward basic and acidic residues: residues 28–39 (QIREARRKEEKQ) and 50–60 (SVKEEERERRD). Residues 28–61 (QIREARRKEEKQQQANLRNRQKSVKEEERERRDI) adopt a coiled-coil conformation. The region spanning 69–115 (CENKGFALLQKMGYKSGQALGKSGDGIVEPIPLNVKTGKSGIGHESS) is the G-patch domain. Serine 115 carries the phosphoserine modification. Positions 189 to 216 (RPEEETEEEEEEEEKEEQDEDECPSEDL) are disordered. Positions 192–213 (EETEEEEEEEEKEEQDEDECPS) are enriched in acidic residues.

Belongs to the GPATCH11 family.

It localises to the chromosome. The protein localises to the centromere. The protein resides in the kinetochore. The protein is G patch domain-containing protein 11 (Gpatch11) of Mus musculus (Mouse).